The primary structure comprises 259 residues: ATP synthase subunit a (259 aa).

Transmembrane regions (helical) follow at residues Thr29–Phe49, Leu89–Leu109, Ser132–Ile154, Ile209–Trp229, and Ala230–Val250.

Belongs to the ATPase A chain family. As to quaternary structure, F-type ATPases have 2 components, CF(1) - the catalytic core - and CF(0) - the membrane proton channel. CF(1) has five subunits: alpha(3), beta(3), gamma(1), delta(1), epsilon(1). CF(0) has three main subunits: a(1), b(2) and c(9-12). The alpha and beta chains form an alternating ring which encloses part of the gamma chain. CF(1) is attached to CF(0) by a central stalk formed by the gamma and epsilon chains, while a peripheral stalk is formed by the delta and b chains.

It is found in the cell inner membrane. Its function is as follows. Key component of the proton channel; it plays a direct role in the translocation of protons across the membrane. This Tolumonas auensis (strain DSM 9187 / NBRC 110442 / TA 4) protein is ATP synthase subunit a.